The primary structure comprises 1406 residues: Receptor-type tyrosine-protein phosphatase eta (1406 aa).

Positions 1–24 (MRRLPLLPPCPLLLLLLLPAEVRC) are cleaved as a signal peptide. The Extracellular portion of the chain corresponds to 25–1044 (TTACTDDCSL…LPQDPGVIAG (1020 aa)). 36 N-linked (GlcNAc...) asparagine glycosylation sites follow: asparagine 36, asparagine 52, asparagine 97, asparagine 103, asparagine 118, asparagine 124, asparagine 186, asparagine 192, asparagine 243, asparagine 275, asparagine 281, asparagine 296, asparagine 302, asparagine 331, asparagine 332, asparagine 364, asparagine 385, asparagine 391, asparagine 453, asparagine 459, asparagine 484, asparagine 500, asparagine 510, asparagine 547, asparagine 568, asparagine 630, asparagine 636, asparagine 651, asparagine 657, asparagine 719, asparagine 745, asparagine 750, asparagine 766, asparagine 776, asparagine 804, and asparagine 828. Residues 39–72 (EEMGTSSNDELSVNATSGNRRLSEDVSLPGRAMS) are disordered. A compositionally biased stretch (polar residues) spans 41–58 (MGTSSNDELSVNATSGNR). Fibronectin type-III domains lie at 82–170 (AVLD…TKPS), 171–259 (PVLD…TKPS), 260–343 (PVLD…SLNL), 346–437 (KPSP…TKPS), 438–523 (PVLD…SLYT), 524–614 (KPTP…TKPR), 615–703 (AVLH…TKPS), 704–793 (MVLN…VPSS), 794–888 (VNAF…TDPP), and 887–979 (PPVP…IVDV). The N-linked (GlcNAc...) asparagine glycan is linked to asparagine 1010. A helical transmembrane segment spans residues 1045-1065 (AVIGCLLAILAVVAIGGYIFW). The Cytoplasmic portion of the chain corresponds to 1066 to 1406 (RRRRKDKRNT…AFGKANGYHA (341 aa)). A Tyrosine-protein phosphatase domain is found at 1110–1367 (FAEEYEELKS…VFLNQCVMDI (258 aa)). Residues aspartate 1274, 1308–1314 (CSAGVGR), and glutamine 1352 each bind substrate. The active-site Phosphocysteine intermediate is cysteine 1308.

This sequence belongs to the protein-tyrosine phosphatase family. Receptor class 3 subfamily. Found on the apical surfaces of retinal Mueller cells, renal tubule cells and intestinal brush border cells.

The protein resides in the cell membrane. It is found in the cell projection. Its subcellular location is the ruffle membrane. The protein localises to the cell junction. The enzyme catalyses O-phospho-L-tyrosyl-[protein] + H2O = L-tyrosyl-[protein] + phosphate. In terms of biological role, tyrosine phosphatase which dephosphorylates or contributes to the dephosphorylation of several substrates. Plays a role in cell adhesion, migration, proliferation and differentiation. Has a role in megakaryocytes and platelet formation. May influence the potential of nonsensory supporting cells to either proliferate or differentiate into hair cells. This is Receptor-type tyrosine-protein phosphatase eta (PTPRJ) from Gallus gallus (Chicken).